Reading from the N-terminus, the 123-residue chain is Fluoride-specific ion channel FluC 2 (123 aa).

3 helical membrane passes run 30-50 (FPLPTLMINVLGALLLGFVAG), 68-88 (VGFIGSFTTFSTWSVDTVLLL), and 93-113 (WPLALANVGISLAVGLAAVWV). Na(+) is bound by residues Gly72 and Thr75.

It belongs to the fluoride channel Fluc/FEX (TC 1.A.43) family.

Its subcellular location is the cell membrane. The enzyme catalyses fluoride(in) = fluoride(out). Its activity is regulated as follows. Na(+) is not transported, but it plays an essential structural role and its presence is essential for fluoride channel function. Its function is as follows. Fluoride-specific ion channel. Important for reducing fluoride concentration in the cell, thus reducing its toxicity. The protein is Fluoride-specific ion channel FluC 2 of Symbiobacterium thermophilum (strain DSM 24528 / JCM 14929 / IAM 14863 / T).